A 289-amino-acid chain; its full sequence is uncharacterized protein (289 aa).

The next 9 membrane-spanning stretches (helical) occupy residues Asn4 to Val24, Leu44 to Phe64, Val68 to Phe88, Ile106 to Leu126, Ile138 to Val158, Ile166 to Val186, Gly196 to Val216, Leu230 to Gly250, and Trp258 to Ser278.

Its subcellular location is the cell membrane. This is an uncharacterized protein from Corynebacterium glutamicum (strain ATCC 13032 / DSM 20300 / JCM 1318 / BCRC 11384 / CCUG 27702 / LMG 3730 / NBRC 12168 / NCIMB 10025 / NRRL B-2784 / 534).